A 498-amino-acid chain; its full sequence is NAD(P)H-quinone oxidoreductase chain 4, chloroplastic (498 aa).

The next 14 helical transmembrane spans lie at 4-24, 37-57, 87-107, 111-131, 134-154, 167-187, 207-227, 242-262, 274-294, 305-325, 331-351, 386-406, 417-437, and 461-481; these read LPWLTLIVLFPFSASFLIPLL, LGICALEFLLITFTFCCQFHL, MGLILLTGFITTLAILAAWPV, VRLFYFLMLAMYSGQIGLFAS, ILLFFFMWELELIPVYLLLSM, FLLYTAGGSIFLLVGSLTMGL, IAVETALYFSFLIAYAVKLPI, HYSTCMLLAGILLKMGGYGLI, FLFSPLLVTMGAVQIAYASLI, IAYSSVSHMGFVIIGISSITD, AILQMISHGLIGAALFFLAGI, LALPGMSSFVAEFLIFLGIVT, IILFIGAIGVILTPIYLLSML, and IFISVFILLPILGIGIYPNLV.

Belongs to the complex I subunit 4 family.

Its subcellular location is the plastid. It localises to the chloroplast thylakoid membrane. The enzyme catalyses a plastoquinone + NADH + (n+1) H(+)(in) = a plastoquinol + NAD(+) + n H(+)(out). It carries out the reaction a plastoquinone + NADPH + (n+1) H(+)(in) = a plastoquinol + NADP(+) + n H(+)(out). The sequence is that of NAD(P)H-quinone oxidoreductase chain 4, chloroplastic from Psilotum nudum (Whisk fern).